Reading from the N-terminus, the 54-residue chain is UPF0235 protein in proC 3'region (54 aa).

This sequence belongs to the UPF0235 family.

This chain is UPF0235 protein in proC 3'region, found in Vibrio alginolyticus.